The chain runs to 328 residues: tRNA uridine(34) hydroxylase (328 aa).

The region spanning 130-224 (LDEDTVVLDT…YGKDPEVQGE (95 aa)) is the Rhodanese domain. Cys-184 (cysteine persulfide intermediate) is an active-site residue.

It belongs to the TrhO family.

It catalyses the reaction uridine(34) in tRNA + AH2 + O2 = 5-hydroxyuridine(34) in tRNA + A + H2O. Its function is as follows. Catalyzes oxygen-dependent 5-hydroxyuridine (ho5U) modification at position 34 in tRNAs. This chain is tRNA uridine(34) hydroxylase, found in Streptococcus sanguinis (strain SK36).